Here is a 347-residue protein sequence, read N- to C-terminus: Dihydroorotase (347 aa).

Zn(2+) contacts are provided by His-13 and His-15. Substrate contacts are provided by residues 15-17 and Asn-41; that span reads HLR. Residues Lys-99, His-136, and His-174 each coordinate Zn(2+). Lys-99 carries the N6-carboxylysine modification. Residue His-136 coordinates substrate. Leu-219 contacts substrate. Zn(2+) is bound at residue Asp-247. The active site involves Asp-247. Residues His-251 and Ala-263 each coordinate substrate.

Belongs to the metallo-dependent hydrolases superfamily. DHOase family. Class II DHOase subfamily. Homodimer. It depends on Zn(2+) as a cofactor.

The enzyme catalyses (S)-dihydroorotate + H2O = N-carbamoyl-L-aspartate + H(+). It functions in the pathway pyrimidine metabolism; UMP biosynthesis via de novo pathway; (S)-dihydroorotate from bicarbonate: step 3/3. Its function is as follows. Catalyzes the reversible cyclization of carbamoyl aspartate to dihydroorotate. In Sinorhizobium medicae (strain WSM419) (Ensifer medicae), this protein is Dihydroorotase.